We begin with the raw amino-acid sequence, 413 residues long: MIENLQPLRGMKDLLPNDYQIHNYIINKARDVGALYGYKQMSTPILEYTKVFNRSMGESSDVMSKEIYSFVDKSNNAVALRPEFTSGIIRSFISNGLQHKLPLKFFSTGPVFRYDRPQAGRQRQFHQLNYEYLGAKGAITDAETVKLAVDILKALEIEEDTTLELNSLGCHESRIVYQQKLVEYLNDFKDQLSGESRLRLNKNPMRILDSKSEIDQKIIAHAPILSEYHTNESKKYFDELQKYLDILGIKYSVNPRLVRGLDYYCHTVFEFTTKKLGSQSTILAGGRYDMLSRIMGNYDVHAIGFAAGIERIALMREYKISVIKPVFVLPIGKNNICYALDIVDKLRLQNIVSIIDPIGKIAKRIQRVLNEDAKFIIFIGDEEKMNNNLKFKDLKNQKEYIIDFEKVLELLKQ.

Belongs to the class-II aminoacyl-tRNA synthetase family. Homodimer.

It is found in the cytoplasm. It carries out the reaction tRNA(His) + L-histidine + ATP = L-histidyl-tRNA(His) + AMP + diphosphate + H(+). The chain is Histidine--tRNA ligase (hisS) from Rickettsia prowazekii (strain Madrid E).